A 108-amino-acid chain; its full sequence is Anthranilate 1,2-dioxygenase ferredoxin subunit (108 aa).

The Rieske domain occupies Trp9 to Val105. Positions 49, 51, 68, and 71 each coordinate [2Fe-2S] cluster.

This sequence belongs to the bacterial ring-hydroxylating dioxygenase ferredoxin component family. In terms of assembly, part of a multicomponent enzyme system composed of a reductase (AndAa), a ferredoxin (AndAb) and a two-subunit oxygenase component (AndAc and AndAd). The cofactor is [2Fe-2S] cluster.

Its pathway is aromatic compound metabolism; anthranilate degradation via hydroxylation; catechol from anthranilate: step 1/1. Its function is as follows. Part of the multicomponent anthranilate dioxygenase, that converts anthranilate to catechol. This protein seems to be a 2Fe-2S ferredoxin. In Burkholderia cepacia (Pseudomonas cepacia), this protein is Anthranilate 1,2-dioxygenase ferredoxin subunit.